A 521-amino-acid chain; its full sequence is MSHQKILILDFGSQVSQLIARRVREQHVYCELHPYDVSEAFIRDFKPQGIILSGGPNSVYEAVDWRAPQVVFELGVPVLGICYGMQTMAEQLGGKVESSAKREFGYAELRARGHSKLFQGIEDRTNAEGHGLLDVWMSHGDKVTELPAGFKVIGSNESCPVAAMADEERGFYGVQFHPEVTHTIKGKEMLARFVHEICGCGNDWNMPDYISEAVEKIRAQVGDEEVILGLSGGVDSSVAAALIHRAIGDQLTCVFVDNGLLRLNEGAQVMETFNRSLGVKVIHVDATEQFMGHLKGVSDPEQKRKIIGREFVEVFQAEAAKLPKARWLAQGTIYPDVIESAGAKTGKAHAIKSHHNVGGLPETLNLKLLEPLRDLFKDEVRELGVALGLPHDMVYRHPFPGPGLGVRILGEVKKEFADLLRRADAIFIDELRAADWYDKTSQAFAVFLPVKSVGVMGDGRTYEYVVALRAVQTQDFMTAHWAELPHSLLGKVSNRIINEVRGINRVVYDISGKPPATIEWE.

The 199-residue stretch at 5–203 folds into the Glutamine amidotransferase type-1 domain; that stretch reads KILILDFGSQ…VHEICGCGND (199 aa). C82 serves as the catalytic Nucleophile. Active-site residues include H177 and E179. Positions 204 to 396 constitute a GMPS ATP-PPase domain; sequence WNMPDYISEA…LGLPHDMVYR (193 aa). 231–237 contributes to the ATP binding site; it reads SGGVDSS.

As to quaternary structure, homodimer.

It carries out the reaction XMP + L-glutamine + ATP + H2O = GMP + L-glutamate + AMP + diphosphate + 2 H(+). It functions in the pathway purine metabolism; GMP biosynthesis; GMP from XMP (L-Gln route): step 1/1. Catalyzes the synthesis of GMP from XMP. This is GMP synthase [glutamine-hydrolyzing] from Azoarcus sp. (strain BH72).